Consider the following 180-residue polypeptide: Large ribosomal subunit protein uL6 (180 aa).

The protein belongs to the universal ribosomal protein uL6 family. In terms of assembly, part of the 50S ribosomal subunit.

In terms of biological role, this protein binds to the 23S rRNA, and is important in its secondary structure. It is located near the subunit interface in the base of the L7/L12 stalk, and near the tRNA binding site of the peptidyltransferase center. In Dictyoglomus thermophilum (strain ATCC 35947 / DSM 3960 / H-6-12), this protein is Large ribosomal subunit protein uL6.